Consider the following 215-residue polypeptide: Peroxiredoxin 1 (215 aa).

The Thioredoxin domain occupies M1–V157. Catalysis depends on C45, which acts as the Cysteine sulfenic acid (-SOH) intermediate. A substrate-binding site is contributed by R120.

It belongs to the peroxiredoxin family. Prx6 subfamily. In terms of assembly, homodecamer. Pentamer of dimers that assemble into a ring structure.

Its subcellular location is the cytoplasm. It catalyses the reaction a hydroperoxide + [thioredoxin]-dithiol = an alcohol + [thioredoxin]-disulfide + H2O. Functionally, thiol-specific peroxidase that catalyzes the reduction of hydrogen peroxide and organic hydroperoxides to water and alcohols, respectively. Plays a role in cell protection against oxidative stress by detoxifying peroxides. The polypeptide is Peroxiredoxin 1 (Sulfuracidifex metallicus (Sulfolobus metallicus)).